We begin with the raw amino-acid sequence, 158 residues long: GTP-dependent dephospho-CoA kinase (158 aa).

GTP is bound by residues D35, V36, D54, K56, E109, and D132.

This sequence belongs to the GTP-dependent DPCK family.

The catalysed reaction is 3'-dephospho-CoA + GTP = GDP + CoA + H(+). The protein operates within cofactor biosynthesis; coenzyme A biosynthesis. In terms of biological role, catalyzes the GTP-dependent phosphorylation of the 3'-hydroxyl group of dephosphocoenzyme A to form coenzyme A (CoA). This is GTP-dependent dephospho-CoA kinase from Methanococcus maripaludis (strain C5 / ATCC BAA-1333).